A 1311-amino-acid polypeptide reads, in one-letter code: DENN domain-containing protein 5B (1311 aa).

Residues 53–270 (ATAAGENFDQ…EVPLPASGRS (218 aa)) enclose the uDENN domain. Residues 154-165 (QAEHNTSAQNCT) are compositionally biased toward polar residues. The segment at 154-201 (QAEHNTSAQNCTSSSSSSSSSSSSSSMDSLSSSLDDVDSPSAHGGRRT) is disordered. A compositionally biased stretch (low complexity) spans 166 to 187 (SSSSSSSSSSSSSSMDSLSSSL). Residues 289-452 (ELPLADFPLA…AVMSLQTSVL (164 aa)) form the cDENN domain. The 166-residue stretch at 454–619 (KELKSTSLRE…DNKIMSQWEE (166 aa)) folds into the dDENN domain. The region spanning 809-969 (LEENTLIASL…DYFCFTSVFT (161 aa)) is the RUN 1 domain. A disordered region spans residues 854–874 (EQQLESPVSNGQERRKTESSV). A helical transmembrane segment spans residues 962–982 (FCFTSVFTTIMIPYRAVIIPI). Residues 973–1081 (IPYRAVIIPI…DDGSLERVLI (109 aa)) form the PLAT domain. The RUN 2 domain occupies 1155 to 1306 (TVLLCGEGGL…FPITLETSLT (152 aa)).

This sequence belongs to the RAB6IP1 family.

Its subcellular location is the membrane. Guanine nucleotide exchange factor (GEF) which may activate the small GTPases Rab. May promote the exchange of GDP to GTP, converting inactive GDP-bound Rab proteins into their active GTP-bound form. The polypeptide is DENN domain-containing protein 5B (dennd5b) (Danio rerio (Zebrafish)).